A 282-amino-acid chain; its full sequence is Bifunctional protein FolD (282 aa).

Residues 165–167 (NRS), S190, and I231 each bind NADP(+).

Belongs to the tetrahydrofolate dehydrogenase/cyclohydrolase family. In terms of assembly, homodimer.

The enzyme catalyses (6R)-5,10-methylene-5,6,7,8-tetrahydrofolate + NADP(+) = (6R)-5,10-methenyltetrahydrofolate + NADPH. It carries out the reaction (6R)-5,10-methenyltetrahydrofolate + H2O = (6R)-10-formyltetrahydrofolate + H(+). It participates in one-carbon metabolism; tetrahydrofolate interconversion. In terms of biological role, catalyzes the oxidation of 5,10-methylenetetrahydrofolate to 5,10-methenyltetrahydrofolate and then the hydrolysis of 5,10-methenyltetrahydrofolate to 10-formyltetrahydrofolate. This Clostridium botulinum (strain Langeland / NCTC 10281 / Type F) protein is Bifunctional protein FolD.